The sequence spans 61 residues: Metallothionein-1L (61 aa).

Residues 1–29 form a beta region; it reads MDPNCSCATGGSCSCASSCKCKECKCTSC. A divalent metal cation contacts are provided by Cys5, Cys7, Cys13, Cys15, Cys19, Cys21, Cys24, Cys26, Cys29, Cys33, Cys34, Cys36, Cys37, Cys41, Cys44, Cys48, Cys50, Cys57, Cys59, and Cys60. The alpha stretch occupies residues 30–61; it reads KKSCCSCCPMGCAKCAQGCVCKGASEKCSCCA.

Belongs to the metallothionein superfamily. Type 1 family. Monomer. Expressed in reticulocytes.

Metallothioneins have a high content of cysteine residues that bind various heavy metals; these proteins are transcriptionally regulated by both heavy metals and glucocorticoids. The polypeptide is Metallothionein-1L (MT1L) (Homo sapiens (Human)).